The following is a 277-amino-acid chain: 2-dehydro-3-deoxyphosphooctonate aldolase (277 aa).

This sequence belongs to the KdsA family.

It localises to the cytoplasm. It catalyses the reaction D-arabinose 5-phosphate + phosphoenolpyruvate + H2O = 3-deoxy-alpha-D-manno-2-octulosonate-8-phosphate + phosphate. The protein operates within carbohydrate biosynthesis; 3-deoxy-D-manno-octulosonate biosynthesis; 3-deoxy-D-manno-octulosonate from D-ribulose 5-phosphate: step 2/3. It participates in bacterial outer membrane biogenesis; lipopolysaccharide biosynthesis. In Mesorhizobium japonicum (strain LMG 29417 / CECT 9101 / MAFF 303099) (Mesorhizobium loti (strain MAFF 303099)), this protein is 2-dehydro-3-deoxyphosphooctonate aldolase (kdsA).